Reading from the N-terminus, the 260-residue chain is Exosome complex component Rrp42 (260 aa).

The protein belongs to the RNase PH family. Rrp42 subfamily. Component of the archaeal exosome complex. Forms a hexameric ring-like arrangement composed of 3 Rrp41-Rrp42 heterodimers. The hexameric ring associates with a trimer of Rrp4 and/or Csl4 subunits.

The protein localises to the cytoplasm. In terms of biological role, non-catalytic component of the exosome, which is a complex involved in RNA degradation. Contributes to the structuring of the Rrp41 active site. The polypeptide is Exosome complex component Rrp42 (Methanocella arvoryzae (strain DSM 22066 / NBRC 105507 / MRE50)).